The chain runs to 951 residues: 5'-3' exoribonuclease 2 (951 aa).

The CCHC-type zinc finger occupies 262 to 278; that stretch reads PCALCNQFGHEVKDCEG. Position 286 is an N6-acetyllysine (Lys-286). Residues 408 to 508 are disordered; the sequence is KDDEDSFRRR…SDSEPEPEDN (101 aa). Residues 416 to 426 show a composition bias toward basic residues; the sequence is RRQKEKRKRMK. Residue Thr-439 is modified to Phosphothreonine. Composition is skewed to polar residues over residues 445 to 458 and 467 to 485; these read SRNS…SNPR and QRNS…SDGS. Phosphoserine is present on residues Ser-448, Ser-471, Ser-473, Ser-475, Ser-482, Ser-487, Ser-499, Ser-501, and Ser-678. An asymmetric dimethylarginine; alternate mark is found at Arg-824, Arg-847, and Arg-851. An omega-N-methylarginine; alternate mark is found at Arg-824, Arg-847, and Arg-851. Arg-880 carries the asymmetric dimethylarginine modification. Arg-883 bears the Asymmetric dimethylarginine; alternate mark. Omega-N-methylarginine; alternate is present on Arg-883. An Omega-N-methylarginine modification is found at Arg-895. Residues 907-951 are disordered; that stretch reads NQYQMLGGPGGYPPRRDDHRGGRQGYPREGRKYPLPPPSGRYSWN. Over residues 920 to 938 the composition is skewed to basic and acidic residues; sequence PRRDDHRGGRQGYPREGRK. At Arg-947 the chain carries Asymmetric dimethylarginine; alternate. Residue Arg-947 is modified to Omega-N-methylarginine; alternate.

It belongs to the 5'-3' exonuclease family. XRN2/RAT1 subfamily. As to quaternary structure, interacts with POLR2A and SMN1/SMN2. Interacts with CDKN2AIP and NKRF. Interacts with CDKN2AIPNL; the interaction is direct. Interacts with TRIM71 (via NHL repeats) in an RNA-dependent manner. Interacts with DHX34; the interaction is RNA-independent. In terms of tissue distribution, expressed in the spleen, testis, heart, brain, lung, liver, skeletal muscle, and kidney.

It localises to the nucleus. Its subcellular location is the nucleolus. Its function is as follows. Possesses 5'-&gt;3' exoribonuclease activity. May promote the termination of transcription by RNA polymerase II. During transcription termination, cleavage at the polyadenylation site liberates a 5' fragment which is subsequently processed to form the mature mRNA and a 3' fragment which remains attached to the elongating polymerase. The processive degradation of this 3' fragment by this protein may promote termination of transcription. Binds to RNA polymerase II (RNAp II) transcription termination R-loops formed by G-rich pause sites. This is 5'-3' exoribonuclease 2 (Xrn2) from Mus musculus (Mouse).